We begin with the raw amino-acid sequence, 268 residues long: Testis-specific serine/threonine-protein kinase 3 (268 aa).

Positions 10–265 constitute a Protein kinase domain; it reads YQLGKTIGEG…IEEVSWHPWL (256 aa). ATP-binding positions include 16–24 and Lys-39; that span reads IGEGTYSKV. Catalysis depends on Asp-134, which acts as the Proton acceptor. Ser-166 is subject to Phosphoserine. Phosphothreonine is present on Thr-168.

It belongs to the protein kinase superfamily. CAMK Ser/Thr protein kinase family. Requires Mg(2+) as cofactor. Mn(2+) serves as cofactor. Autophosphorylated at Ser-166. Phosphorylation at Thr-168 by PDPK1 activates the serine/threonine protein kinase activity.

The protein resides in the cell projection. It localises to the cilium. It is found in the flagellum. The catalysed reaction is L-seryl-[protein] + ATP = O-phospho-L-seryl-[protein] + ADP + H(+). It carries out the reaction L-threonyl-[protein] + ATP = O-phospho-L-threonyl-[protein] + ADP + H(+). Its activity is regulated as follows. Activated by phosphorylation on Thr-168 by PDPK1. Functionally, serine/threonine protein kinase required for spermatid development and male fertility. The sequence is that of Testis-specific serine/threonine-protein kinase 3 from Homo sapiens (Human).